The sequence spans 446 residues: GTPase Der (446 aa).

2 consecutive EngA-type G domains span residues 2 to 166 and 179 to 354; these read TVVA…PEAP and IRVS…RQYN. GTP-binding positions include 8–15, 55–59, 118–121, 185–192, 232–236, and 297–300; these read GRPNVGKS, DTAGF, NKID, DTAGI, and NKWD. The KH-like domain occupies 355 to 440; that stretch reads QRVTTGIVNR…PIRLIFRPRQ (86 aa).

The protein belongs to the TRAFAC class TrmE-Era-EngA-EngB-Septin-like GTPase superfamily. EngA (Der) GTPase family. In terms of assembly, associates with the 50S ribosomal subunit.

GTPase that plays an essential role in the late steps of ribosome biogenesis. This chain is GTPase Der, found in Syntrophobacter fumaroxidans (strain DSM 10017 / MPOB).